Reading from the N-terminus, the 371-residue chain is Aspartate-semialdehyde dehydrogenase (371 aa).

NADP(+)-binding positions include 11-14, 38-39, and Q75; these read RGMV and TS. R104 lines the phosphate pocket. C137 functions as the Acyl-thioester intermediate in the catalytic mechanism. A substrate-binding site is contributed by Q164. 167–168 contacts NADP(+); that stretch reads SG. Residue E243 coordinates substrate. K246 is a phosphate binding site. R269 contacts substrate. H276 acts as the Proton acceptor in catalysis. Q352 contacts NADP(+).

The protein belongs to the aspartate-semialdehyde dehydrogenase family. In terms of assembly, homodimer.

It catalyses the reaction L-aspartate 4-semialdehyde + phosphate + NADP(+) = 4-phospho-L-aspartate + NADPH + H(+). It participates in amino-acid biosynthesis; L-lysine biosynthesis via DAP pathway; (S)-tetrahydrodipicolinate from L-aspartate: step 2/4. Its pathway is amino-acid biosynthesis; L-methionine biosynthesis via de novo pathway; L-homoserine from L-aspartate: step 2/3. The protein operates within amino-acid biosynthesis; L-threonine biosynthesis; L-threonine from L-aspartate: step 2/5. Functionally, catalyzes the NADPH-dependent formation of L-aspartate-semialdehyde (L-ASA) by the reductive dephosphorylation of L-aspartyl-4-phosphate. The protein is Aspartate-semialdehyde dehydrogenase of Buchnera aphidicola subsp. Schizaphis graminum (strain Sg).